The primary structure comprises 297 residues: MVRVEKIKTKKGKRVLVNRASKTVENDKKALFCRGAKTNEIISHAMMDLFDMKKPLTTKMDKHNPYHLFEDETPIVRAGSKFDTSLFVLGSNSKKKPNCLTFGRTYDGQLLDMAELRITSYKSSSNFEAAKMTLGSKPCVILEGAAFESDGDMKRIGNLMVDWFRGPKVDTVRLEGLETVIVFTALDETNLALRVYRPMLKKSATATPRVELAEMGPSISFEVMRKKLADDALFKLACKKPKALMKKRRKNLSEDVFGNQLARVHVGKQRTDDIQTRKVKALRKTPLVEAAPENAIE.

Residues 28–232 (KKALFCRGAK…VMRKKLADDA (205 aa)) form the Brix domain.

The protein belongs to the RPF2 family.

Its subcellular location is the nucleus. It is found in the nucleolus. This Caenorhabditis elegans protein is Ribosome production factor 2 homolog.